Reading from the N-terminus, the 331-residue chain is Pyruvate synthase subunit PorB (331 aa).

The [4Fe-4S] cluster site is built by C21, C24, C59, and C222.

In terms of assembly, heterotetramer of one alpha, one beta, one delta and one gamma chain. [4Fe-4S] cluster serves as cofactor.

It catalyses the reaction 2 oxidized [2Fe-2S]-[ferredoxin] + pyruvate + CoA = 2 reduced [2Fe-2S]-[ferredoxin] + acetyl-CoA + CO2 + H(+). This is Pyruvate synthase subunit PorB (porB) from Pyrococcus furiosus (strain ATCC 43587 / DSM 3638 / JCM 8422 / Vc1).